The sequence spans 510 residues: Bifunctional purine biosynthesis protein PurH (510 aa).

An MGS-like domain is found at Met1 to Val143.

It belongs to the PurH family.

It carries out the reaction (6R)-10-formyltetrahydrofolate + 5-amino-1-(5-phospho-beta-D-ribosyl)imidazole-4-carboxamide = 5-formamido-1-(5-phospho-D-ribosyl)imidazole-4-carboxamide + (6S)-5,6,7,8-tetrahydrofolate. The catalysed reaction is IMP + H2O = 5-formamido-1-(5-phospho-D-ribosyl)imidazole-4-carboxamide. It participates in purine metabolism; IMP biosynthesis via de novo pathway; 5-formamido-1-(5-phospho-D-ribosyl)imidazole-4-carboxamide from 5-amino-1-(5-phospho-D-ribosyl)imidazole-4-carboxamide (10-formyl THF route): step 1/1. Its pathway is purine metabolism; IMP biosynthesis via de novo pathway; IMP from 5-formamido-1-(5-phospho-D-ribosyl)imidazole-4-carboxamide: step 1/1. The polypeptide is Bifunctional purine biosynthesis protein PurH (Deinococcus deserti (strain DSM 17065 / CIP 109153 / LMG 22923 / VCD115)).